Here is a 313-residue protein sequence, read N- to C-terminus: Probable 5-dehydro-4-deoxyglucarate dehydratase (313 aa).

This sequence belongs to the DapA family.

The enzyme catalyses 5-dehydro-4-deoxy-D-glucarate + H(+) = 2,5-dioxopentanoate + CO2 + H2O. Its pathway is carbohydrate acid metabolism; D-glucarate degradation; 2,5-dioxopentanoate from D-glucarate: step 2/2. The chain is Probable 5-dehydro-4-deoxyglucarate dehydratase from Bradyrhizobium sp. (strain BTAi1 / ATCC BAA-1182).